Here is a 353-residue protein sequence, read N- to C-terminus: Mannonate dehydratase (353 aa).

Belongs to the mannonate dehydratase family. Fe(2+) is required as a cofactor. Requires Mn(2+) as cofactor.

It carries out the reaction D-mannonate = 2-dehydro-3-deoxy-D-gluconate + H2O. The protein operates within carbohydrate metabolism; pentose and glucuronate interconversion. Functionally, catalyzes the dehydration of D-mannonate. The sequence is that of Mannonate dehydratase from Burkholderia cenocepacia (strain ATCC BAA-245 / DSM 16553 / LMG 16656 / NCTC 13227 / J2315 / CF5610) (Burkholderia cepacia (strain J2315)).